We begin with the raw amino-acid sequence, 134 residues long: Protein NrdI (134 aa).

The protein belongs to the NrdI family.

Probably involved in ribonucleotide reductase function. This Serratia proteamaculans (strain 568) protein is Protein NrdI.